A 650-amino-acid polypeptide reads, in one-letter code: Aminopeptidase B (650 aa).

Residue 298 to 302 (GGMEN) coordinates substrate. His325 is a Zn(2+) binding site. Catalysis depends on Glu326, which acts as the Proton acceptor. Positions 329 and 348 each coordinate Zn(2+). Lys446 bears the N6-acetyllysine mark.

This sequence belongs to the peptidase M1 family. Monomer. Zn(2+) is required as a cofactor.

Its subcellular location is the secreted. It catalyses the reaction Release of N-terminal Arg and Lys from oligopeptides when P1' is not Pro. Also acts on arylamides of Arg and Lys.. Its function is as follows. Exopeptidase which selectively removes arginine and/or lysine residues from the N-terminus of several peptide substrates including Arg(0)-Leu-enkephalin, Arg(0)-Met-enkephalin and Arg(-1)-Lys(0)-somatostatin-14. Can hydrolyze leukotriene A4 (LTA-4) into leukotriene B4 (LTB-4). This Mus musculus (Mouse) protein is Aminopeptidase B (Rnpep).